The following is a 232-amino-acid chain: CD302 antigen (232 aa).

Positions 1–22 (MPRAAPPALLLPLLGLAAAAAA) are cleaved as a signal peptide. The Extracellular segment spans residues 23-168 (DCPSSTWVQF…YEKKYLSDNR (146 aa)). The 121-residue stretch at 32–152 (FQDSCYIFLQ…CEVSSVEGTL (121 aa)) folds into the C-type lectin domain. An N-linked (GlcNAc...) asparagine glycan is attached at N109. An intrachain disulfide couples C128 to C143. A helical transmembrane segment spans residues 169 to 189 (ILISALVIASTVILTVLGAVV). The Cytoplasmic segment spans residues 190–232 (WFLYKRSLDSGFTTVFSAAHQSPYNDDCVLVVAEENEYDIQFN).

Its subcellular location is the membrane. The protein localises to the cell projection. It localises to the filopodium. The protein resides in the cytoplasm. It is found in the cell cortex. Its subcellular location is the microvillus. Functionally, potential multifunctional C-type lectin receptor that may play roles in endocytosis and phagocytosis as well as in cell adhesion and migration. The protein is CD302 antigen of Bos taurus (Bovine).